The sequence spans 463 residues: tRNA-splicing endonuclease subunit Sen2 (463 aa).

A phosphoserine mark is found at serine 32 and serine 147. Positions histidine 120–histidine 213 are disordered. Basic and acidic residues-rich tracts occupy residues proline 139–glutamine 149 and serine 159–leucine 170. Residues tyrosine 367 and histidine 375 contribute to the active site. Phosphoserine is present on residues serine 406, serine 409, and serine 413. Lysine 414 is an active-site residue.

Belongs to the tRNA-intron endonuclease family. As to quaternary structure, tRNA splicing endonuclease is a heterotetramer composed of TSEN2, TSEN15, TSEN34/LENG5 and TSEN54. tRNA splicing endonuclease complex also contains proteins of the pre-mRNA 3'-end processing machinery such as CLP1, CPSF1, CPSF4 and CSTF2.

The protein resides in the nucleus. Its subcellular location is the nucleolus. The enzyme catalyses pretRNA = a 3'-half-tRNA molecule with a 5'-OH end + a 5'-half-tRNA molecule with a 2',3'-cyclic phosphate end + an intron with a 2',3'-cyclic phosphate and a 5'-hydroxyl terminus.. In terms of biological role, constitutes one of the two catalytic subunit of the tRNA-splicing endonuclease complex, a complex responsible for identification and cleavage of the splice sites in pre-tRNA. It cleaves pre-tRNA at the 5'- and 3'-splice sites to release the intron. The products are an intron and two tRNA half-molecules bearing 2',3'-cyclic phosphate and 5'-OH termini. There are no conserved sequences at the splice sites, but the intron is invariably located at the same site in the gene, placing the splice sites an invariant distance from the constant structural features of the tRNA body. Probably carries the active site for 5'-splice site cleavage. The tRNA splicing endonuclease is also involved in mRNA processing via its association with pre-mRNA 3'-end processing factors, establishing a link between pre-tRNA splicing and pre-mRNA 3'-end formation, suggesting that the endonuclease subunits function in multiple RNA-processing events. This is tRNA-splicing endonuclease subunit Sen2 (Tsen2) from Rattus norvegicus (Rat).